Here is a 380-residue protein sequence, read N- to C-terminus: Tubulin-like protein CetZ (380 aa).

GTP is bound by residues 10-14, 103-105, Glu136, Asn163, and Asn181; these read QCGTK and GTG. Residues 359 to 380 form a disordered region; sequence PSLEATGSDDPEGFAEYREVSR.

This sequence belongs to the CetZ family.

The protein resides in the cytoplasm. In terms of biological role, involved in cell shape control. This Thermococcus kodakarensis (strain ATCC BAA-918 / JCM 12380 / KOD1) (Pyrococcus kodakaraensis (strain KOD1)) protein is Tubulin-like protein CetZ.